Reading from the N-terminus, the 427-residue chain is Trigger factor (427 aa).

The 81-residue stretch at 160–240 (TDTVIGDVEK…VKEVKRLELP (81 aa)) folds into the PPIase FKBP-type domain.

It belongs to the FKBP-type PPIase family. Tig subfamily.

The protein localises to the cytoplasm. It catalyses the reaction [protein]-peptidylproline (omega=180) = [protein]-peptidylproline (omega=0). In terms of biological role, involved in protein export. Acts as a chaperone by maintaining the newly synthesized protein in an open conformation. Functions as a peptidyl-prolyl cis-trans isomerase. In Chlorobium phaeobacteroides (strain DSM 266 / SMG 266 / 2430), this protein is Trigger factor.